Consider the following 432-residue polypeptide: Histidine--tRNA ligase (432 aa).

This sequence belongs to the class-II aminoacyl-tRNA synthetase family.

It localises to the cytoplasm. It carries out the reaction tRNA(His) + L-histidine + ATP = L-histidyl-tRNA(His) + AMP + diphosphate + H(+). The chain is Histidine--tRNA ligase from Halobacterium salinarum (strain ATCC 29341 / DSM 671 / R1).